Consider the following 606-residue polypeptide: RUN and FYVE domain-containing protein 2 (606 aa).

Positions 37 to 169 (DSDYPPLQQF…IDANLCVKGE (133 aa)) constitute an RUN domain. A coiled-coil region spans residues 210–534 (EELNRQLNST…IKEANKALQG (325 aa)). The FYVE-type zinc finger occupies 540 to 598 (DKEATHCKLCEKEFSLSKRKHHCRNCGEIFCNACSDNELPLPSSPKPVRVCDSCHALLI). Positions 546, 549, 562, 565, 570, 573, 590, and 593 each coordinate Zn(2+).

Interacts with BMX. Expressed in brain, lung and testis.

Its subcellular location is the nucleus. This chain is RUN and FYVE domain-containing protein 2 (RUFY2), found in Homo sapiens (Human).